The sequence spans 364 residues: MYFLVADHREHHVIPFLKTDFHDMQHNPMFTQKQALLEIKQLFTGDYLICKSPTTILACIERKTYKDFAASLKDGRYKNRQKMLSLREQTNCQLYFFVEGPAFPNPQKKINHVAYASIITAMTHLMVRDHIFVIQTKNEAHSSQKLVQLFYAFSKEMVCVVPTSLTPTDEELCIKLWSSLSGISGVIGKILANTCSVAHLVSGKLSSQNIDQLKTPSNRPFPKKVKRMLISISKGNKELEIKLLSGVPNIGKKLAAEILKDHALLFFLNQPVECLANIQIVQKTRTIKLGMKRAEAIHYFLNWCGSAHVTDDSQNITEASRPATQPAATQPLHEVSDDATSNASDTSSPIGHQTLSKEMLLNTA.

The ERCC4 domain occupies 3–102 (FLVADHREHH…QLYFFVEGPA (100 aa)). The span at 319–328 (ASRPATQPAA) shows a compositional bias: polar residues. A disordered region spans residues 319–352 (ASRPATQPAATQPLHEVSDDATSNASDTSSPIGH). Residues 338 to 348 (DATSNASDTSS) are compositionally biased toward low complexity.

It belongs to the asfivirus EP364R family.

Its function is as follows. Plays a role in the inhibition of type I interferon signaling pathway. Mechanistically, specifically interacts with 2',3'-cGAMP and cleaves it via its phosphodiesterase activity. In turn, prevents 2',3'-cGAMP interaction with host ER-resident STING1 leading to inhibition of downstream signaling pathway and type I interferon production. This African swine fever virus (strain Badajoz 1971 Vero-adapted) (Ba71V) protein is ERCC4 domain-containing protein EP364R.